A 555-amino-acid chain; its full sequence is MAISSIFLLSLFSLIYVIPIEATHHVYQTLETLSSHHSSKSNHQPYRTAYHFQPLKNWINDPNGPMRYGGFYHLFYQYNPKGAVWGNIVWAHSVSKDLVNWTPLDHAIHPSQPSDIKGCWSGSATILPGGKPAILYTGIDPNNHQVQNIAIPKNMSDPLLREWKKSPKNPLMEPTIANKINSSSFRDPTTSWLGKDGFWRVLIGSKIDTKGMAILYKSKNFVDWVEAKHPLHSAEGTGMWECPDFYPVLDKNLLRTGVDTSRNGDDDVRHVLKVSLDDTKHDHYLIGSYDVVKDVFVPENGFEDNGFVLRYDYGKYYASKTFFDDGKNRRILLGWVNESSSVADDVKKGWSGIHTIPREIWLHESGKQLVQWPVKEIENLRMNPVNWPTKVIKGGERISITGVDSVQADVEISFEISDLGKVESLRKWIDPQLLCSQKGAGVKGGVGPFGLLVFASQGLKEYTAVFFRIFKYQDKNLVLMCSDQSRSSLNKDNDMTSYGTFVDVDPLHEKLSLRTLIDHSVVESFGGEGRACVTARVYPTLAIHDKAMLKLTSEY.

The signal sequence occupies residues 1–22; the sequence is MAISSIFLLSLFSLIYVIPIEA. Residues 58 to 61, glutamine 77, tryptophan 85, and 120 to 121 each bind substrate; these read WIND and WS. Aspartate 61 is a catalytic residue. Aspartate 140 is a catalytic residue. Residues asparagine 154 and asparagine 181 are each glycosylated (N-linked (GlcNAc...) asparagine). Residues 186-187, glutamate 241, and aspartate 277 contribute to the substrate site; that span reads RD. Asparagine 337 carries N-linked (GlcNAc...) asparagine glycosylation. A disulfide bridge links cysteine 435 with cysteine 481.

The protein belongs to the glycosyl hydrolase 32 family.

It carries out the reaction Hydrolysis of terminal non-reducing beta-D-fructofuranoside residues in beta-D-fructofuranosides.. The polypeptide is Beta-fructofuranosidase, cell wall isozyme (BFRUCT1) (Pisum sativum (Garden pea)).